The following is a 404-amino-acid chain: Alanine racemase (404 aa).

K34 acts as the Proton acceptor; specific for D-alanine in catalysis. N6-(pyridoxal phosphate)lysine is present on K34. Residue R133 coordinates substrate. The region spanning 226–273 (EVSSNLSYTEEFESNTAALTTTACINKCPDVSVRLTPKLPLKGSYTVR) is the RPE1 insert domain. Catalysis depends on Y298, which acts as the Proton acceptor; specific for L-alanine. M346 lines the substrate pocket.

Belongs to the alanine racemase family. It depends on pyridoxal 5'-phosphate as a cofactor.

The catalysed reaction is L-alanine = D-alanine. It participates in amino-acid biosynthesis; D-alanine biosynthesis; D-alanine from L-alanine: step 1/1. Functionally, catalyzes the interconversion of L-alanine and D-alanine. May also act on other amino acids. This Rickettsia prowazekii (strain Madrid E) protein is Alanine racemase (alr).